Reading from the N-terminus, the 61-residue chain is uncharacterized protein (61 aa).

This is an uncharacterized protein from Haemophilus influenzae (Bacteriophage HP1).